Reading from the N-terminus, the 156-residue chain is Ribosomal RNA large subunit methyltransferase H (156 aa).

S-adenosyl-L-methionine contacts are provided by residues leucine 73, glycine 104, and 123–128 (ISSMTL).

The protein belongs to the RNA methyltransferase RlmH family. As to quaternary structure, homodimer.

Its subcellular location is the cytoplasm. The catalysed reaction is pseudouridine(1915) in 23S rRNA + S-adenosyl-L-methionine = N(3)-methylpseudouridine(1915) in 23S rRNA + S-adenosyl-L-homocysteine + H(+). Specifically methylates the pseudouridine at position 1915 (m3Psi1915) in 23S rRNA. The chain is Ribosomal RNA large subunit methyltransferase H from Burkholderia ambifaria (strain MC40-6).